Reading from the N-terminus, the 374-residue chain is 4-hydroxy-3-methylbut-2-en-1-yl diphosphate synthase (flavodoxin) (374 aa).

Positions 270, 273, 305, and 312 each coordinate [4Fe-4S] cluster.

It belongs to the IspG family. The cofactor is [4Fe-4S] cluster.

The catalysed reaction is (2E)-4-hydroxy-3-methylbut-2-enyl diphosphate + oxidized [flavodoxin] + H2O + 2 H(+) = 2-C-methyl-D-erythritol 2,4-cyclic diphosphate + reduced [flavodoxin]. Its pathway is isoprenoid biosynthesis; isopentenyl diphosphate biosynthesis via DXP pathway; isopentenyl diphosphate from 1-deoxy-D-xylulose 5-phosphate: step 5/6. Converts 2C-methyl-D-erythritol 2,4-cyclodiphosphate (ME-2,4cPP) into 1-hydroxy-2-methyl-2-(E)-butenyl 4-diphosphate. The polypeptide is 4-hydroxy-3-methylbut-2-en-1-yl diphosphate synthase (flavodoxin) (Cellvibrio japonicus (strain Ueda107) (Pseudomonas fluorescens subsp. cellulosa)).